The sequence spans 907 residues: Protein translocase subunit SecA (907 aa).

ATP-binding positions include glutamine 86, glycine 104–threonine 108, and aspartate 511. Basic and acidic residues-rich tracts occupy residues alanine 838–valine 856 and glutamate 869–aspartate 888. Residues alanine 838–aspartate 907 form a disordered region. Residues cysteine 890, cysteine 892, cysteine 901, and histidine 902 each coordinate Zn(2+). Residues lysine 896–aspartate 907 are compositionally biased toward basic residues.

This sequence belongs to the SecA family. Monomer and homodimer. Part of the essential Sec protein translocation apparatus which comprises SecA, SecYEG and auxiliary proteins SecDF-YajC and YidC. The cofactor is Zn(2+).

It localises to the cell inner membrane. It is found in the cytoplasm. It catalyses the reaction ATP + H2O + cellular proteinSide 1 = ADP + phosphate + cellular proteinSide 2.. Part of the Sec protein translocase complex. Interacts with the SecYEG preprotein conducting channel. Has a central role in coupling the hydrolysis of ATP to the transfer of proteins into and across the cell membrane, serving both as a receptor for the preprotein-SecB complex and as an ATP-driven molecular motor driving the stepwise translocation of polypeptide chains across the membrane. This Francisella philomiragia subsp. philomiragia (strain ATCC 25017 / CCUG 19701 / FSC 153 / O#319-036) protein is Protein translocase subunit SecA.